The primary structure comprises 321 residues: UPF0676 protein C1494.01 (321 aa).

The Fe2OG dioxygenase domain occupies 159-267 (EEDVLRLLKY…RQTIAYFVTP (109 aa)).

The protein belongs to the UPF0676 family.

The protein resides in the cytoplasm. The protein localises to the nucleus. This chain is UPF0676 protein C1494.01, found in Schizosaccharomyces pombe (strain 972 / ATCC 24843) (Fission yeast).